We begin with the raw amino-acid sequence, 143 residues long: Large ribosomal subunit protein uL13 (143 aa).

The protein belongs to the universal ribosomal protein uL13 family. As to quaternary structure, part of the 50S ribosomal subunit.

In terms of biological role, this protein is one of the early assembly proteins of the 50S ribosomal subunit, although it is not seen to bind rRNA by itself. It is important during the early stages of 50S assembly. This chain is Large ribosomal subunit protein uL13, found in Neisseria gonorrhoeae (strain ATCC 700825 / FA 1090).